A 209-amino-acid polypeptide reads, in one-letter code: N-(5'-phosphoribosyl)anthranilate isomerase (209 aa).

It belongs to the TrpF family.

It catalyses the reaction N-(5-phospho-beta-D-ribosyl)anthranilate = 1-(2-carboxyphenylamino)-1-deoxy-D-ribulose 5-phosphate. Its pathway is amino-acid biosynthesis; L-tryptophan biosynthesis; L-tryptophan from chorismate: step 3/5. The protein is N-(5'-phosphoribosyl)anthranilate isomerase of Staphylococcus carnosus (strain TM300).